Here is a 165-residue protein sequence, read N- to C-terminus: 3-isopropylmalate dehydratase small subunit (165 aa).

Belongs to the LeuD family. LeuD type 2 subfamily. Heterodimer of LeuC and LeuD.

It catalyses the reaction (2R,3S)-3-isopropylmalate = (2S)-2-isopropylmalate. The protein operates within amino-acid biosynthesis; L-leucine biosynthesis; L-leucine from 3-methyl-2-oxobutanoate: step 2/4. Its function is as follows. Catalyzes the isomerization between 2-isopropylmalate and 3-isopropylmalate, via the formation of 2-isopropylmaleate. The polypeptide is 3-isopropylmalate dehydratase small subunit (Halothermothrix orenii (strain H 168 / OCM 544 / DSM 9562)).